Reading from the N-terminus, the 362-residue chain is Histidinol-phosphate aminotransferase 2 (362 aa).

K222 carries the post-translational modification N6-(pyridoxal phosphate)lysine.

Belongs to the class-II pyridoxal-phosphate-dependent aminotransferase family. Histidinol-phosphate aminotransferase subfamily. As to quaternary structure, homodimer. Requires pyridoxal 5'-phosphate as cofactor.

The enzyme catalyses L-histidinol phosphate + 2-oxoglutarate = 3-(imidazol-4-yl)-2-oxopropyl phosphate + L-glutamate. It functions in the pathway amino-acid biosynthesis; L-histidine biosynthesis; L-histidine from 5-phospho-alpha-D-ribose 1-diphosphate: step 7/9. In Carboxydothermus hydrogenoformans (strain ATCC BAA-161 / DSM 6008 / Z-2901), this protein is Histidinol-phosphate aminotransferase 2.